The following is a 347-amino-acid chain: NADH-quinone oxidoreductase subunit H 1 (347 aa).

9 helical membrane passes run 14 to 34, 50 to 70, 83 to 103, 115 to 135, 161 to 181, 198 to 218, 258 to 278, 286 to 306, and 321 to 341; these read IMIG…AYVL, PNVV…KFVF, IFLL…AVIP, VGIL…IMGG, IGFV…TDIV, FLDW…ISAL, AICL…LPPV, VPGI…FAMV, and LGWK…AFVL.

This sequence belongs to the complex I subunit 1 family. As to quaternary structure, NDH-1 is composed of 14 different subunits. Subunits NuoA, H, J, K, L, M, N constitute the membrane sector of the complex.

Its subcellular location is the cell inner membrane. The catalysed reaction is a quinone + NADH + 5 H(+)(in) = a quinol + NAD(+) + 4 H(+)(out). Functionally, NDH-1 shuttles electrons from NADH, via FMN and iron-sulfur (Fe-S) centers, to quinones in the respiratory chain. The immediate electron acceptor for the enzyme in this species is believed to be ubiquinone. Couples the redox reaction to proton translocation (for every two electrons transferred, four hydrogen ions are translocated across the cytoplasmic membrane), and thus conserves the redox energy in a proton gradient. This subunit may bind ubiquinone. The protein is NADH-quinone oxidoreductase subunit H 1 of Rhizobium meliloti (strain 1021) (Ensifer meliloti).